A 460-amino-acid chain; its full sequence is Proline--tRNA ligase (460 aa).

This sequence belongs to the class-II aminoacyl-tRNA synthetase family. ProS type 3 subfamily. As to quaternary structure, homodimer.

The protein resides in the cytoplasm. It catalyses the reaction tRNA(Pro) + L-proline + ATP = L-prolyl-tRNA(Pro) + AMP + diphosphate. In terms of biological role, catalyzes the attachment of proline to tRNA(Pro) in a two-step reaction: proline is first activated by ATP to form Pro-AMP and then transferred to the acceptor end of tRNA(Pro). The protein is Proline--tRNA ligase of Methanococcus maripaludis (strain DSM 14266 / JCM 13030 / NBRC 101832 / S2 / LL).